Consider the following 669-residue polypeptide: DNA ligase 2 (669 aa).

NAD(+) contacts are provided by residues 35-39 (DKEYD) and 83-84 (SL). Lys125 acts as the N6-AMP-lysine intermediate in catalysis. NAD(+) contacts are provided by Arg147, Glu181, and Lys317. Cys410, Cys413, Cys426, and Cys432 together coordinate Zn(2+). The BRCT domain maps to 590–669 (VVENAFTGKT…EEFEQLINNM (80 aa)).

Belongs to the NAD-dependent DNA ligase family. LigA subfamily. Mg(2+) is required as a cofactor. Mn(2+) serves as cofactor.

It catalyses the reaction NAD(+) + (deoxyribonucleotide)n-3'-hydroxyl + 5'-phospho-(deoxyribonucleotide)m = (deoxyribonucleotide)n+m + AMP + beta-nicotinamide D-nucleotide.. DNA ligase that catalyzes the formation of phosphodiester linkages between 5'-phosphoryl and 3'-hydroxyl groups in double-stranded DNA using NAD as a coenzyme and as the energy source for the reaction. It is essential for DNA replication and repair of damaged DNA. This chain is DNA ligase 2, found in Clostridium acetobutylicum (strain ATCC 824 / DSM 792 / JCM 1419 / IAM 19013 / LMG 5710 / NBRC 13948 / NRRL B-527 / VKM B-1787 / 2291 / W).